The primary structure comprises 101 residues: Protein Tat (101 aa).

Residues 1–24 form an interaction with human CREBBP region; sequence MEPVDPNREPWNHPGSQPKTACTN. The interval 1 to 48 is transactivation; it reads MEPVDPNREPWNHPGSQPKTACTNCYCKKCCYHCQVCFLQKGLGISYG. 3 residues coordinate Zn(2+): cysteine 22, cysteine 25, and cysteine 27. The interval 22–37 is cysteine-rich; the sequence is CTNCYCKKCCYHCQVC. Position 28 is an N6-acetyllysine; by host PCAF (lysine 28). Zn(2+) is bound by residues cysteine 30, histidine 33, cysteine 34, and cysteine 37. The core stretch occupies residues 38-48; sequence FLQKGLGISYG. The interval 48–101 is disordered; the sequence is GRKKRRQRRSAPPGSKNHQDLIPEQPLFQTQRKPTGPEESKKEVESKAEPDRFD. The Nuclear localization signal, RNA-binding (TAR), and protein transduction motif lies at 49–57; it reads RKKRRQRRS. The tract at residues 49-86 is interaction with the host capping enzyme RNGTT; that stretch reads RKKRRQRRSAPPGSKNHQDLIPEQPLFQTQRKPTGPEE. 2 positions are modified to N6-acetyllysine; by host EP300 and GCN5L2: lysine 50 and lysine 51. An asymmetric dimethylarginine; by host PRMT6 mark is found at arginine 52 and arginine 53. A compositionally biased stretch (basic and acidic residues) spans 82 to 101; sequence TGPEESKKEVESKAEPDRFD.

This sequence belongs to the lentiviruses Tat family. As to quaternary structure, interacts with host CCNT1. Associates with the P-TEFb complex composed at least of Tat, P-TEFb (CDK9 and CCNT1), TAR RNA, RNA Pol II. Recruits the HATs CREBBP, TAF1/TFIID, EP300, PCAF and GCN5L2. Interacts with host KAT5/Tip60; this interaction targets the latter to degradation. Interacts with the host deacetylase SIRT1. Interacts with host capping enzyme RNGTT; this interaction stimulates RNGTT. Binds to host KDR, and to the host integrins ITGAV/ITGB3 and ITGA5/ITGB1. Interacts with host KPNB1/importin beta-1 without previous binding to KPNA1/importin alpha-1. Interacts with EIF2AK2. Interacts with host nucleosome assembly protein NAP1L1; this interaction may be required for the transport of Tat within the nucleus, since the two proteins interact at the nuclear rim. Interacts with host C1QBP/SF2P32; this interaction involves lysine-acetylated Tat. Interacts with the host chemokine receptors CCR2, CCR3 and CXCR4. Interacts with host DPP4/CD26; this interaction may trigger an anti-proliferative effect. Interacts with host LDLR. Interacts with the host extracellular matrix metalloproteinase MMP1. Interacts with host PRMT6; this interaction mediates Tat's methylation. Interacts with, and is ubiquitinated by MDM2/Hdm2. Interacts with host PSMC3 and HTATIP2. Interacts with STAB1; this interaction may overcome SATB1-mediated repression of IL2 and IL2RA (interleukin) in T cells by binding to the same domain than HDAC1. Interacts (when acetylated) with human CDK13, thereby increasing HIV-1 mRNA splicing and promoting the production of the doubly spliced HIV-1 protein Nef. Interacts with host TBP; this interaction modulates the activity of transcriptional pre-initiation complex. Interacts with host RELA. Interacts with host PLSCR1; this interaction negatively regulates Tat transactivation activity by altering its subcellular distribution. Asymmetrical arginine methylation by host PRMT6 seems to diminish the transactivation capacity of Tat and affects the interaction with host CCNT1. Post-translationally, acetylation by EP300, CREBBP, GCN5L2/GCN5 and PCAF regulates the transactivation activity of Tat. EP300-mediated acetylation of Lys-50 promotes dissociation of Tat from the TAR RNA through the competitive binding to PCAF's bromodomain. In addition, the non-acetylated Tat's N-terminus can also interact with PCAF. PCAF-mediated acetylation of Lys-28 enhances Tat's binding to CCNT1. Lys-50 is deacetylated by SIRT1. In terms of processing, polyubiquitination by host MDM2 does not target Tat to degradation, but activates its transactivation function and fosters interaction with CCNT1 and TAR RNA. Phosphorylated by EIF2AK2 on serine and threonine residues adjacent to the basic region important for TAR RNA binding and function. Phosphorylation of Tat by EIF2AK2 is dependent on the prior activation of EIF2AK2 by dsRNA.

It is found in the host nucleus. The protein localises to the host nucleolus. The protein resides in the host cytoplasm. Its subcellular location is the secreted. In terms of biological role, transcriptional activator that increases RNA Pol II processivity, thereby increasing the level of full-length viral transcripts. Recognizes a hairpin structure at the 5'-LTR of the nascent viral mRNAs referred to as the transactivation responsive RNA element (TAR) and recruits the cyclin T1-CDK9 complex (P-TEFb complex) that will in turn hyperphosphorylate the RNA polymerase II to allow efficient elongation. The CDK9 component of P-TEFb and other Tat-activated kinases hyperphosphorylate the C-terminus of RNA Pol II that becomes stabilized and much more processive. Other factors such as HTATSF1/Tat-SF1, SUPT5H/SPT5, and HTATIP2 are also important for Tat's function. Besides its effect on RNA Pol II processivity, Tat induces chromatin remodeling of proviral genes by recruiting the histone acetyltransferases (HATs) CREBBP, EP300 and PCAF to the chromatin. This also contributes to the increase in proviral transcription rate, especially when the provirus integrates in transcriptionally silent region of the host genome. To ensure maximal activation of the LTR, Tat mediates nuclear translocation of NF-kappa-B by interacting with host RELA. Through its interaction with host TBP, Tat may also modulate transcription initiation. Tat can reactivate a latently infected cell by penetrating in it and transactivating its LTR promoter. In the cytoplasm, Tat is thought to act as a translational activator of HIV-1 mRNAs. Its function is as follows. Extracellular circulating Tat can be endocytosed by surrounding uninfected cells via the binding to several surface receptors such as CD26, CXCR4, heparan sulfate proteoglycans (HSPG) or LDLR. Neurons are rarely infected, but they internalize Tat via their LDLR. Through its interaction with nuclear HATs, Tat is potentially able to control the acetylation-dependent cellular gene expression. Modulates the expression of many cellular genes involved in cell survival, proliferation or in coding for cytokines or cytokine receptors. Tat plays a role in T-cell and neurons apoptosis. Tat induced neurotoxicity and apoptosis probably contribute to neuroAIDS. Circulating Tat also acts as a chemokine-like and/or growth factor-like molecule that binds to specific receptors on the surface of the cells, affecting many cellular pathways. In the vascular system, Tat binds to ITGAV/ITGB3 and ITGA5/ITGB1 integrins dimers at the surface of endothelial cells and competes with bFGF for heparin-binding sites, leading to an excess of soluble bFGF. The sequence is that of Protein Tat from Human immunodeficiency virus type 1 group M subtype J (isolate SE9173) (HIV-1).